The following is a 331-amino-acid chain: Lactamase-like protein nscB (331 aa).

Zn(2+)-binding residues include H106, H108, D110, and H111. Residue D110 is the Proton donor/acceptor of the active site.

It belongs to the metallo-beta-lactamase superfamily. Zn(2+) is required as a cofactor.

Its pathway is secondary metabolite biosynthesis. Its function is as follows. Lactamase-like protein; part of the gene cluster that mediates the biosynthesis of neosartoricin B, a prenylated anthracenone that probably exhibits T-cell antiproliferative activity, suggestive of a physiological role as an immunosuppressive agent. The non-reducing polyketide synthase nscA probably synthesizes and cyclizes the decaketide backbone. The hydrolase nscB then mediates the product release through hydrolysis followed by spontaneous decarboxylation. The prenyltransferase nscD catalyzes the addition of the dimethylallyl group to the aromatic C5. The FAD-dependent monooxygenase nscC is then responsible for the stereospecific hydroxylation at C2. Neosartoricin B can be converted into two additional compounds neosartoricins C and D. Neosartoricin C is a spirocyclic compound that is cyclized through the attack of C3 hydroxyl on C14, followed by dehydration. On the other hand, neosartoricin D is a further cyclized compound in which attack of C2 on C14 in neosartoricin C results in the formation of the acetal-containing dioxabicyclo-octanone ring. Both of these compounds are novel and possibly represent related metabolites of the gene cluster. This Trichophyton equinum (strain ATCC MYA-4606 / CBS 127.97) (Horse ringworm fungus) protein is Lactamase-like protein nscB.